The following is a 607-amino-acid chain: Matrix metalloproteinase-16 (607 aa).

A signal peptide spans 1-31; sequence MILLTFSTGRRLDFVHHSGVFFLQTLLWILC. Residues 32-119 constitute a propeptide that is removed on maturation; that stretch reads ATVCGTEQYF…SSKFHIRRKR (88 aa). Asn-83 carries N-linked (GlcNAc...) asparagine glycosylation. Positions 99–106 match the Cysteine switch motif; the sequence is PRCGVPDQ. Cys-101 is a Zn(2+) binding site. At 120–564 the chain is on the extracellular side; it reads YALTGQKWQH…LDNTASTVKA (445 aa). Residue Asp-183 coordinates Ca(2+). 2 residues coordinate Zn(2+): His-193 and Asp-195. Ca(2+) is bound by residues Asp-200, Gly-201, Gly-203, and Phe-205. His-208 contributes to the Zn(2+) binding site. Ca(2+)-binding residues include Gly-215, Gly-217, and Asp-219. His-221 contributes to the Zn(2+) binding site. 2 residues coordinate Ca(2+): Asp-223 and Glu-226. His-246 provides a ligand contact to Zn(2+). Glu-247 is a catalytic residue. Zn(2+)-binding residues include His-250 and His-256. The disordered stretch occupies residues 281 to 340; that stretch reads DDLQGIQKIYGPPDKIPPPTRPLPTVPPHRSIPPADPRKNDRPKPPRPPTGRPSYPGAKP. Residues 294–315 are compositionally biased toward pro residues; sequence DKIPPPTRPLPTVPPHRSIPPA. Hemopexin repeat units follow at residues 340–388, 389–434, 436–484, and 485–532; these read PNIC…WRGL, PPSI…GSGI, PHGI…KGIP, and ESPQ…FMGC. The cysteines at positions 343 and 532 are disulfide-linked. Residues 565–585 traverse the membrane as a helical segment; that stretch reads IAIVIPCILALCLLVLVYTVF. Residues 586-607 lie on the Cytoplasmic side of the membrane; sequence QFKRKGTPRHILYCKRSMQEWV.

This sequence belongs to the peptidase M10A family. In terms of assembly, interacts with CSPG4 through CSPG4 chondroitin sulfate glycosaminoglycan. It depends on Zn(2+) as a cofactor. The cofactor is Ca(2+). The precursor is cleaved by a furin endopeptidase. In terms of tissue distribution, expressed in heart, brain, placenta, ovary and small intestine. Isoform Short is found in the ovary.

The protein localises to the cell membrane. It is found in the secreted. The protein resides in the extracellular space. Its subcellular location is the extracellular matrix. It localises to the cell surface. With respect to regulation, TIMP-2 shows little inhibitory activity compared to TIMP-1. TIMP-1 seems to have less binding affinity than TIMP-2 for the short isoform. Endopeptidase that degrades various components of the extracellular matrix, such as collagen type III and fibronectin. Activates progelatinase A. Involved in the matrix remodeling of blood vessels. Isoform short cleaves fibronectin and also collagen type III, but at lower rate. It has no effect on type I, II, IV and V collagen. However, upon interaction with CSPG4, it may be involved in degradation and invasion of type I collagen by melanoma cells. In Homo sapiens (Human), this protein is Matrix metalloproteinase-16.